The chain runs to 324 residues: Cysteine-rich repeat secretory protein 9 (324 aa).

The N-terminal stretch at 1-27 (MARIIITLTIPLFYFFFFSLLSHQTMS) is a signal peptide. 2 consecutive Gnk2-homologous domains span residues 29–132 (PDHI…NVSF) and 138–248 (IVPS…TSVL). Residues 251–286 (PPPSPSAPPPRSPPPKSSPPSSLPQTPSPPLVFTPP) are disordered.

This sequence belongs to the cysteine-rich repeat secretory protein family.

It is found in the secreted. The chain is Cysteine-rich repeat secretory protein 9 (CRRSP9) from Arabidopsis thaliana (Mouse-ear cress).